Reading from the N-terminus, the 247-residue chain is 14-3-3 protein gamma-B (247 aa).

This sequence belongs to the 14-3-3 family. As to quaternary structure, homodimer, and heterodimer with other family members.

Its subcellular location is the cytoplasm. Adapter protein implicated in the regulation of a large spectrum of both general and specialized signaling pathways. Binds to a large number of partners, usually by recognition of a phosphoserine or phosphothreonine motif. Binding generally results in the modulation of the activity of the binding partner. This is 14-3-3 protein gamma-B (ywhag-b) from Xenopus laevis (African clawed frog).